The primary structure comprises 1265 residues: Methionine synthase (1265 aa).

The Hcy-binding domain occupies 19–338 (QDEIEAILQE…DHIREIAEAV (320 aa)). The Zn(2+) site is built by cysteine 260, cysteine 323, and cysteine 324. Residues 371-632 (FVNIGERCNV…IHKELLQLCE (262 aa)) enclose the Pterin-binding domain. Residues 382–384 (GSR), aspartate 449, asparagine 470, aspartate 537, asparagine 579, arginine 585, and arginine 591 contribute to the (6S)-5,6,7,8-tetrahydrofolate site. The region spanning 662–759 (QTDEWRNGPL…FMEKEREETK (98 aa)) is the B12-binding N-terminal domain. Residues glutamate 709, 782-786 (GDVHD), histidine 785, serine 830, threonine 834, and alanine 886 contribute to the methylcob(III)alamin site. One can recognise a B12-binding domain in the interval 772–907 (QGTIVLATVK…DENLKDEYFE (136 aa)). An AdoMet activation domain is found at 923–1265 (SLKERRYLTL…LGPILGYDTD (343 aa)). Residues aspartate 974, arginine 1172, and 1227 to 1228 (YF) contribute to the S-adenosyl-L-methionine site. A Phosphothreonine modification is found at threonine 1264.

It belongs to the vitamin-B12 dependent methionine synthase family. In terms of assembly, monomer. Dimer. Forms a multiprotein complex with MMACHC, MMADHC and MTRR. Requires methylcob(III)alamin as cofactor. It depends on Zn(2+) as a cofactor.

It localises to the cytoplasm. The enzyme catalyses (6S)-5-methyl-5,6,7,8-tetrahydrofolate + L-homocysteine = (6S)-5,6,7,8-tetrahydrofolate + L-methionine. Its pathway is amino-acid biosynthesis; L-methionine biosynthesis via de novo pathway; L-methionine from L-homocysteine (MetH route): step 1/1. Catalyzes the transfer of a methyl group from methylcob(III)alamin (MeCbl) to homocysteine, yielding enzyme-bound cob(I)alamin and methionine in the cytosol. MeCbl is an active form of cobalamin (vitamin B12) used as a cofactor for methionine biosynthesis. Cob(I)alamin form is regenerated to MeCbl by a transfer of a methyl group from 5-methyltetrahydrofolate. The processing of cobalamin in the cytosol occurs in a multiprotein complex composed of at least MMACHC, MMADHC, MTRR (methionine synthase reductase) and MTR which may contribute to shuttle safely and efficiently cobalamin towards MTR in order to produce methionine. This chain is Methionine synthase (MTR), found in Bos taurus (Bovine).